A 256-amino-acid polypeptide reads, in one-letter code: Pimeloyl-[acyl-carrier protein] methyl ester esterase (256 aa).

Residues 15 to 242 enclose the AB hydrolase-1 domain; that stretch reads HLVLLHGWGL…AAHAPFISHP (228 aa). Substrate-binding positions include W22, 82 to 83, and 143 to 147; these read SL and FLALQ. The active-site Nucleophile is the S82. Catalysis depends on residues D207 and H235. H235 contacts substrate.

It belongs to the AB hydrolase superfamily. Carboxylesterase BioH family. Monomer.

Its subcellular location is the cytoplasm. The catalysed reaction is 6-carboxyhexanoyl-[ACP] methyl ester + H2O = 6-carboxyhexanoyl-[ACP] + methanol + H(+). It functions in the pathway cofactor biosynthesis; biotin biosynthesis. The physiological role of BioH is to remove the methyl group introduced by BioC when the pimeloyl moiety is complete. It allows to synthesize pimeloyl-ACP via the fatty acid synthetic pathway through the hydrolysis of the ester bonds of pimeloyl-ACP esters. The chain is Pimeloyl-[acyl-carrier protein] methyl ester esterase from Escherichia coli O81 (strain ED1a).